The following is a 120-amino-acid chain: Small ribosomal subunit protein bS16 (120 aa).

Residues 81–120 (GLAKRPARNNPQKAEPGEKAKERAAKRAEKAAAPAEDAAA) are disordered. Positions 95–110 (EPGEKAKERAAKRAEK) are enriched in basic and acidic residues. Residues 111–120 (AAAPAEDAAA) are compositionally biased toward low complexity.

It belongs to the bacterial ribosomal protein bS16 family.

The chain is Small ribosomal subunit protein bS16 from Methylobacterium radiotolerans (strain ATCC 27329 / DSM 1819 / JCM 2831 / NBRC 15690 / NCIMB 10815 / 0-1).